A 450-amino-acid polypeptide reads, in one-letter code: Exodeoxyribonuclease 7 large subunit (450 aa).

This sequence belongs to the XseA family. In terms of assembly, heterooligomer composed of large and small subunits.

The protein resides in the cytoplasm. The enzyme catalyses Exonucleolytic cleavage in either 5'- to 3'- or 3'- to 5'-direction to yield nucleoside 5'-phosphates.. In terms of biological role, bidirectionally degrades single-stranded DNA into large acid-insoluble oligonucleotides, which are then degraded further into small acid-soluble oligonucleotides. The chain is Exodeoxyribonuclease 7 large subunit from Listeria monocytogenes serotype 4b (strain CLIP80459).